The following is a 530-amino-acid chain: TNF receptor-associated factor family protein DDB_G0272829 (530 aa).

Residues 35–81 (CQICEGLLISSLIPNRMKALQCINGHCFCLTCWESILEIKSECPTCR) form an RING-type; degenerate zinc finger. 2 consecutive TRAF-type zinc fingers follow at residues 134-188 (RHES…KQMQ) and 189-246 (GHIL…NDND). 3 disordered regions span residues 242 to 267 (NNDN…LSSS), 391 to 432 (TTTT…DNQG), and 483 to 530 (FNQL…GTSL). Low complexity-rich tracts occupy residues 253–267 (NNSN…LSSS), 391–415 (TTTT…NNNN), and 485–502 (QLSQ…SQSL). A coiled-coil region spans residues 361–422 (ILEHQQQQNQ…NNNNEDEEDD (62 aa)). The segment covering 509 to 530 (ITINQNQNTPSNPFSIFSGTSL) has biased composition (polar residues).

It belongs to the TNF receptor-associated factor family.

It is found in the cytoplasm. Its function is as follows. Probable adapter protein and signal transducer that links members of the tumor necrosis factor receptor family to different signaling pathways by association with the receptor cytoplasmic domain and kinases. This Dictyostelium discoideum (Social amoeba) protein is TNF receptor-associated factor family protein DDB_G0272829.